A 299-amino-acid polypeptide reads, in one-letter code: MLWLFYSSAIIASVILDFVGIIMSLFITVVNYKTWVKSHRISSSERILFSLGITRFFMLALFLVNTIYFVSSNKERSVYLSAFFVLCFMFLDSSSLWFVTLLNSLYCVKITNFQHSVFLLLKRNISPKIPRLLPACVLISAFTTCLYITLSQASPFPELVTKRNNTSFNISEGILSLVVSFVLSSSLQFIINVTSASLLIYSLRRHIRKMQKNATGFWNPQTEAHVGAMKLMIYFLILYIPYSVATLVQYLPFYAGMDMGTKSICLIFATLYSPGHSVLIIITHPKLKTTAKKILCFKK.

Topologically, residues M1–A9 are extracellular. Residues I10–V30 form a helical membrane-spanning segment. The Cytoplasmic segment spans residues N31–R46. The helical transmembrane segment at I47–I67 threads the bilayer. Over Y68–S81 the chain is Extracellular. A helical transmembrane segment spans residues A82–L102. Residues N103–R131 lie on the Cytoplasmic side of the membrane. The helical transmembrane segment at L132–Q152 threads the bilayer. Topologically, residues A153–E172 are extracellular. N164, N165, and N169 each carry an N-linked (GlcNAc...) asparagine glycan. Residues G173 to V193 traverse the membrane as a helical segment. Residues T194 to K230 are Cytoplasmic-facing. The helical transmembrane segment at L231 to L251 threads the bilayer. Residues P252 to K262 are Extracellular-facing. A helical transmembrane segment spans residues S263 to T283. Residues H284 to K299 are Cytoplasmic-facing.

This sequence belongs to the G-protein coupled receptor T2R family.

It localises to the membrane. The protein resides in the cell projection. The protein localises to the cilium membrane. Gustducin-coupled receptor implicated in the perception of bitter compounds in the oral cavity and the gastrointestinal tract. Signals through PLCB2 and the calcium-regulated cation channel TRPM5. In airway epithelial cells, binding of denatonium increases the intracellular calcium ion concentration and stimulates ciliary beat frequency. The protein is Taste receptor type 2 member 4 (TAS2R4) of Papio hamadryas (Hamadryas baboon).